The sequence spans 154 residues: 3-dehydroquinate dehydratase (154 aa).

Tyrosine 23 (proton acceptor) is an active-site residue. Residues asparagine 75, histidine 81, and aspartate 88 each contribute to the substrate site. Histidine 101 (proton donor) is an active-site residue. Substrate-binding positions include 102 to 103 (LS) and arginine 112.

The protein belongs to the type-II 3-dehydroquinase family. In terms of assembly, homododecamer.

The catalysed reaction is 3-dehydroquinate = 3-dehydroshikimate + H2O. It functions in the pathway metabolic intermediate biosynthesis; chorismate biosynthesis; chorismate from D-erythrose 4-phosphate and phosphoenolpyruvate: step 3/7. Catalyzes a trans-dehydration via an enolate intermediate. In Teredinibacter turnerae (strain ATCC 39867 / T7901), this protein is 3-dehydroquinate dehydratase.